The primary structure comprises 374 residues: Low-specificity L-threonine aldolase (374 aa).

Lys213 carries the post-translational modification N6-(pyridoxal phosphate)lysine. A disordered region spans residues 354-374 (HPHKDDGRNNKKMYSLDAIKK).

This sequence belongs to the threonine aldolase family. Homotetramer. Pyridoxal 5'-phosphate serves as cofactor.

It catalyses the reaction L-threonine = acetaldehyde + glycine. The catalysed reaction is L-allo-threonine = acetaldehyde + glycine. The protein operates within amino-acid degradation; L-threonine degradation via aldolase pathway; acetaldehyde and glycine from L-threonine: step 1/1. The sequence is that of Low-specificity L-threonine aldolase (GLY1) from Candida albicans (Yeast).